The primary structure comprises 454 residues: Protoheme IX farnesyltransferase 1 (454 aa).

The segment at 1–186 (MRTTGFSGLL…AYFELTKPRL (186 aa)) is unknown. 4 consecutive transmembrane segments (helical) span residues 9-29 (LLSATVVGVYVLVVVGATAAL), 59-79 (GVAAVVGLLVIATAVVGWSET), 87-107 (LALALALYPAQVVLGALVATG), and 113-133 (LHLFVAMAIFAVLVVGLAWHL). The segment at 137 to 164 (TGSDDAPESPPELAPPVDEEPAATEQPA) is disordered. Transmembrane regions (helical) follow at residues 186–206 (LMWLLCLVAGAGMVIAGTPTV), 209–229 (VVFTLGGGVLAIGASGTFNHV), 251–271 (VPVANALAFGGLLAVASLWAF), 276–296 (LLAAALGLAAIAFYSVVYTLI), 300–320 (NTVQNTVIGGAAGALPALIGY), 321–341 (AAVTGTIGIGGLVLAAVIFLW), 377–397 (HIVFYLGATLLGAGALAAVTD), 398–418 (LGWLYAATAVLAAGVFLWAVV), and 433–453 (FHASNAYLGLVLVAILIDSLA). A protoheme IX prenyltransferase region spans residues 187–451 (MWLLCLVAGA…LVLVAILIDS (265 aa)).

The protein in the C-terminal section; belongs to the UbiA prenyltransferase family. Protoheme IX farnesyltransferase subfamily.

Its subcellular location is the cell membrane. The enzyme catalyses heme b + (2E,6E)-farnesyl diphosphate + H2O = Fe(II)-heme o + diphosphate. The protein operates within porphyrin-containing compound metabolism; heme O biosynthesis; heme O from protoheme: step 1/1. Converts heme B (protoheme IX) to heme O by substitution of the vinyl group on carbon 2 of heme B porphyrin ring with a hydroxyethyl farnesyl side group. In Natronomonas pharaonis (strain ATCC 35678 / DSM 2160 / CIP 103997 / JCM 8858 / NBRC 14720 / NCIMB 2260 / Gabara) (Halobacterium pharaonis), this protein is Protoheme IX farnesyltransferase 1 (ctaB1).